The chain runs to 1617 residues: MNMKQKSVYQQTKALLCKNFLKKWRMKRESLLEWGLSILLGLCIALFSSSMRNVQFPGMAPQNLGRVDKFNSSSLMVVYTPISNLTQQIMNKTALAPLLKGTSVIGAPNKTHMDEILLENLPYAMGIIFNETFSYKLIFFQGYNSPLWKEDFSAHCWDGYGEFSCTLTKYWNRGFVALQTAINTAIIEITTNHPVMEELMSVTAITMKTLPFITKNLLHNEMFILFFLLHFSPLVYFISLNVTKERKKSKNLMKMMGLQDSAFWLSWGLIYAGFIFIISIFVTIIITFTQIIVMTGFMVIFILFFLYGLSLVALVFLMSVLLKKAVLTNLVVFLLTLFWGCLGFTVFYEQLPSSLEWILNICSPFAFTTGMIQIIKLDYNLNGVIFPDPSGDSYTMIATFSMLLLDGLIYLLLALYFDKILPYGDERHYSPLFFLNSSSCFQHQRTNAKVIEKEIDAEHPSDDYFEPVAPEFQGKEAIRIRNVKKEYKGKSGKVEALKGLLFDIYEGQITAILGHSGAGKSSLLNILNGLSVPTEGSVTIYNKNLSEMQDLEEIRKITGVCPQFNVQFDILTVKENLSLFAKIKGIHLKEVEQEVQRILLELDMQNIQDNLAKHLSEGQKRKLTFGITILGDPQILLLDEPTTGLDPFSRDQVWSLLRERRADHVILFSTQSMDEADILADRKVIMSNGRLKCAGSSMFLKRRWGLGYHLSLHRNEICNPEQITSFITHHIPDAKLKTENKEKLVYTLPLERTNTFPDLFSDLDKCSDQGVTGYDISMSTLNEVFMKLEGQSTIEQDFEQVEMIRDSESLNEMELAHSSFSEMQTAVSDMGLWRMQVFAMARLRFLKLKRQTKVLLTLLLVFGIAIFPLIVENIMYAMLNEKIDWEFKNELYFLSPGQLPQEPRTSLLIINNTESNIEDFIKSLKHQNILLEVDDFENRNGTDGLSYNGAIIVSGKQKDYRFSVVCNTKRLHCFPILMNIISNGLLQMFNHTQHIRIESSPFPLSHIGLWTGLPDGSFFLFLVLCSISPYITMGSISDYKKNAKSQLWISGLYTSAYWCGQALVDVSFFILILLLMYLIFYIENMQYLLITSQIVFALVIVTPGYAASLVFFIYMISFIFRKRRKNSGLWSFYFFFASTIMFSITLINHFDLSILITTMVLVPSYTLLGFKTFLEVRDQEHYREFPEANFELSATDFLVCFIPYFQTLLFVFVLRCMELKCGKKRMRKDPVFRISPQSRDAKPNPEEPIDEDEDIQTERIRTATALTTSILDEKPVIIASCLHKEYAGQKKSCFSKRKKKIAARNISFCVQEGEILGLLGPNGAGKSSSIRMISGITKPTAGEVELKGCSSVLGHLGYCPQENVLWPMLTLREHLEVYAAVKGLRKADARLAIARLVSAFKLHEQLNVPVQKLTAGITRKLCFVLSLLGNSPVLLLDEPSTGIDPTGQQQMWQAIQAVVKNTERGVLLTTHNLAEAEALCDRVAIMVSGRLRCIGSIQHLKNKLGKDYILELKVKETSQVTLVHTEILKLFPQAAGQERYSSLLTYKLPVADVYPLSQTFHKLEAVKHNFNLEEYSLSQCTLEKVFLELSKEQEVGNFDEEIDTTMRWKLLPHSDEP.

The chain crosses the membrane as a helical span at residues Leu-31 to Met-51. N-linked (GlcNAc...) asparagine glycans are attached at residues Asn-84 and Asn-109. Transmembrane regions (helical) follow at residues Met-222 to Val-242, Gly-268 to Phe-288, Phe-297 to Leu-317, Leu-327 to Phe-347, Leu-355 to Ile-375, and Ile-397 to Phe-417. An ABC transporter 1 domain is found at Ile-478–His-713. Gly-514–Ser-521 lines the ATP pocket. Residues Val-854–Ile-874 form a helical membrane-spanning segment. An N-linked (GlcNAc...) asparagine glycan is attached at Asn-940. The next 6 helical transmembrane spans lie at Ile-1007–Ile-1027, Ala-1062–Ile-1082, Ile-1094–Tyr-1114, Ser-1127–Ile-1147, Phe-1150–Phe-1170, and Ala-1194–Leu-1214. In terms of domain architecture, ABC transporter 2 spans Gly-1288 to Lys-1513. Gly-1320–Ser-1327 serves as a coordination point for ATP.

This sequence belongs to the ABC transporter superfamily. ABCA family. Widely expressed with higher expression in liver.

The protein resides in the golgi apparatus membrane. Functionally, probable transporter which may play a role in macrophage lipid transport and homeostasis. The polypeptide is ATP-binding cassette sub-family A member 6 (ABCA6) (Homo sapiens (Human)).